The primary structure comprises 121 residues: Chorion class A proteins Ld9 (121 aa).

Belongs to the chorion protein family.

In terms of biological role, this protein is one of many from the eggshell of the gypsy moth. The polypeptide is Chorion class A proteins Ld9 (Lymantria dispar (Gypsy moth)).